We begin with the raw amino-acid sequence, 397 residues long: Protein WRKY1 (397 aa).

A DNA-binding region (WRKY) is located at residues 326–392 (KVADIPADEF…YEGDHNHNRV (67 aa)).

The protein belongs to the WRKY group II-d family. As to quaternary structure, interacts with RS2. In terms of tissue distribution, more abundant in apices and young leaf primordia than in fully expanded leaf tissues.

Its subcellular location is the nucleus. Functionally, transcription factor. Interacts specifically with the W box (5'-(T)TGAC[CT]-3'), a frequently occurring elicitor-responsive cis-acting element. In Zea mays (Maize), this protein is Protein WRKY1.